The primary structure comprises 163 residues: MSDGQKLTHIDASGEAHMVDVGDKAETVRVAVAEGFVKMKPETLALIRDGNAKKGDVIGTARLAGIMAAKQTANLIPLCHPLMLTKVAVDITEDTGLPGLRVEAMVKLSGKTGVEMEALTAVSIACLTIYDMAKAADKGMEIVNIRLLEKSGGKSGDFRRQES.

Residues 78–80 and 116–117 contribute to the substrate site; these read LCH and ME. Residue D131 is part of the active site.

It belongs to the MoaC family. Homohexamer; trimer of dimers.

The catalysed reaction is (8S)-3',8-cyclo-7,8-dihydroguanosine 5'-triphosphate = cyclic pyranopterin phosphate + diphosphate. The protein operates within cofactor biosynthesis; molybdopterin biosynthesis. In terms of biological role, catalyzes the conversion of (8S)-3',8-cyclo-7,8-dihydroguanosine 5'-triphosphate to cyclic pyranopterin monophosphate (cPMP). The sequence is that of Cyclic pyranopterin monophosphate synthase from Agrobacterium fabrum (strain C58 / ATCC 33970) (Agrobacterium tumefaciens (strain C58)).